Consider the following 423-residue polypeptide: Heat shock transcription factor, X-linked (423 aa).

Residues 1-25 show a composition bias toward basic and acidic residues; that stretch reads MEDKRSLSMARCEERNSRGQDHGLE. Disordered regions lie at residues 1-56, 215-303, and 397-423; these read MEDK…STGS, KSAP…EGSQ, and PHSH…DQST. Residues 98 to 282 mediate DNA binding; the sequence is PFPQKLWRLV…PATPVMVPDS (185 aa). Lys-215 participates in a covalent cross-link: Glycyl lysine isopeptide (Lys-Gly) (interchain with G-Cter in SUMO1). Residues 243 to 254 show a composition bias toward polar residues; it reads HTSPNENDQVTP.

Belongs to the HSF family. In terms of tissue distribution, testis-specific.

It is found in the nucleus. It localises to the cytoplasm. This chain is Heat shock transcription factor, X-linked (HSFX1), found in Homo sapiens (Human).